Consider the following 142-residue polypeptide: Large ribosomal subunit protein uL11 (142 aa).

The protein belongs to the universal ribosomal protein uL11 family. As to quaternary structure, part of the ribosomal stalk of the 50S ribosomal subunit. Interacts with L10 and the large rRNA to form the base of the stalk. L10 forms an elongated spine to which L12 dimers bind in a sequential fashion forming a multimeric L10(L12)X complex. In terms of processing, one or more lysine residues are methylated.

In terms of biological role, forms part of the ribosomal stalk which helps the ribosome interact with GTP-bound translation factors. This chain is Large ribosomal subunit protein uL11, found in Shewanella amazonensis (strain ATCC BAA-1098 / SB2B).